The sequence spans 178 residues: Actin-related protein 2/3 complex subunit 3-A (178 aa).

This sequence belongs to the ARPC3 family. In terms of assembly, component of the Arp2/3 complex composed of actr2/arp2, actr3/arp3, arpc1 (arpc1a or arpc1b), arpc2, arpc3, arpc4 and arpc5.

It localises to the cytoplasm. The protein localises to the cytoskeleton. Its subcellular location is the cell projection. It is found in the nucleus. Component of the Arp2/3 complex, a multiprotein complex that mediates actin polymerization upon stimulation by nucleation-promoting factor (NPF). The Arp2/3 complex mediates the formation of branched actin networks in the cytoplasm, providing the force for cell motility. In addition to its role in the cytoplasmic cytoskeleton, the Arp2/3 complex also promotes actin polymerization in the nucleus, thereby regulating gene transcription and repair of damaged DNA. The Arp2/3 complex promotes homologous recombination (HR) repair in response to DNA damage by promoting nuclear actin polymerization, leading to drive motility of double-strand breaks (DSBs). This is Actin-related protein 2/3 complex subunit 3-A (arpc3-a) from Xenopus laevis (African clawed frog).